The following is an 83-amino-acid chain: Protein ShK-like4 (83 aa).

Residues 1-21 form the signal peptide; it reads MDTRVIAVLFVAIMVLSSTNA. Positions 22–48 are excised as a propeptide; sequence LPKQKGSYKNMNHADFLKGLDRASSKR. 3 disulfides stabilise this stretch: cysteine 50-cysteine 82, cysteine 57-cysteine 75, and cysteine 67-cysteine 79. The region spanning 50–83 is the ShKT domain; that stretch reads CRDSHWSCFFQSNYEDICSTAQAEECALSCGLCE.

Post-translationally, contains 3 disulfide bonds. In terms of tissue distribution, expressed in various neurons (ectodermal sensory cells) (in planulae and primary polyps). Not expressed in nematocytes.

Its function is as follows. Probable neuropeptide. The sequence is that of Protein ShK-like4 from Nematostella vectensis (Starlet sea anemone).